The following is a 76-amino-acid chain: Zinc finger protein 706 (76 aa).

Residues 1-13 (MARGQQKIQSQQK) show a composition bias toward low complexity. Disordered regions lie at residues 1-32 (MARGQQKIQSQQKNAKKQAGQKKKQGHDQKAA) and 53-76 (TFKQHFESKHPKTPLPPELADVQA). Over residues 14 to 25 (NAKKQAGQKKKQ) the composition is skewed to basic residues. The C2H2-type zinc finger occupies 39–62 (YTCTVCRTQMPDPKTFKQHFESKH). Over residues 53-62 (TFKQHFESKH) the composition is skewed to basic and acidic residues.

Its subcellular location is the cytoplasm. The protein resides in the nucleus. Functionally, transcription repressor involved in the exit of embryonic stem cells (ESCs) from self-renewal. Acts by repressing expression of KLF4. This Homo sapiens (Human) protein is Zinc finger protein 706.